Reading from the N-terminus, the 101-residue chain is MAGGYGVMADDGTIDYSVHEAWNEATNVYLIVILVSIGLFMYARKNKRKIMRIFTVPPTAESATEANFYDDMKKIRLRQQLEMYYIARKHEQNDSIQLTVE.

A helical membrane pass occupies residues 25-43 (ATNVYLIVILVSIGLFMYA).

This sequence belongs to the SMIM19 family.

The protein localises to the membrane. This chain is Small integral membrane protein 19 (smim19), found in Xenopus tropicalis (Western clawed frog).